Here is a 147-residue protein sequence, read N- to C-terminus: Putative 2'-deoxynucleoside 5'-phosphate N-hydrolase 1 (147 aa).

Substrate-binding positions include 10–16 (YFCGSIR), Tyr-25, His-42, Glu-90, and 114–116 (SAM).

This sequence belongs to the 2'-deoxynucleoside 5'-phosphate N-hydrolase 1 family. Monomer and homodimer.

The protein localises to the cytoplasm. The protein resides in the nucleus. It catalyses the reaction a pyrimidine 2'-deoxyribonucleoside 5'-phosphate + H2O = a pyrimidine nucleobase + 2-deoxy-D-ribose 5-phosphate. The catalysed reaction is a purine 2'-deoxyribonucleoside 5'-phosphate + H2O = a purine nucleobase + 2-deoxy-D-ribose 5-phosphate. Its function is as follows. Catalyzes the cleavage of the N-glycosidic bond of deoxyribonucleoside 5'-monophosphates to yield deoxyribose 5-phosphate and a purine or pyrimidine base. The sequence is that of Putative 2'-deoxynucleoside 5'-phosphate N-hydrolase 1 from Nematostella vectensis (Starlet sea anemone).